Here is a 544-residue protein sequence, read N- to C-terminus: CTP synthase (544 aa).

The interval 1–266 (MKKRFIFITG…DQIICHHFKL (266 aa)) is amidoligase domain. CTP is bound at residue Ser14. Ser14 lines the UTP pocket. Residues 15–20 (SLGKGI) and Asp72 each bind ATP. The Mg(2+) site is built by Asp72 and Glu140. CTP contacts are provided by residues 147-149 (DIE), 187-192 (KTKPTQ), and Lys223. UTP is bound by residues 187–192 (KTKPTQ) and Lys223. A Glutamine amidotransferase type-1 domain is found at 291-541 (TIGIIGKYIK…IKAAIQYKKI (251 aa)). Residue Gly352 participates in L-glutamine binding. Catalysis depends on Cys379, which acts as the Nucleophile; for glutamine hydrolysis. L-glutamine contacts are provided by residues 380-383 (LGMQ), Glu403, and Arg469. Residues His514 and Glu516 contribute to the active site.

The protein belongs to the CTP synthase family. As to quaternary structure, homotetramer.

The enzyme catalyses UTP + L-glutamine + ATP + H2O = CTP + L-glutamate + ADP + phosphate + 2 H(+). The catalysed reaction is L-glutamine + H2O = L-glutamate + NH4(+). It catalyses the reaction UTP + NH4(+) + ATP = CTP + ADP + phosphate + 2 H(+). Its pathway is pyrimidine metabolism; CTP biosynthesis via de novo pathway; CTP from UDP: step 2/2. With respect to regulation, allosterically activated by GTP, when glutamine is the substrate; GTP has no effect on the reaction when ammonia is the substrate. The allosteric effector GTP functions by stabilizing the protein conformation that binds the tetrahedral intermediate(s) formed during glutamine hydrolysis. Inhibited by the product CTP, via allosteric rather than competitive inhibition. Catalyzes the ATP-dependent amination of UTP to CTP with either L-glutamine or ammonia as the source of nitrogen. Regulates intracellular CTP levels through interactions with the four ribonucleotide triphosphates. The polypeptide is CTP synthase (Buchnera aphidicola subsp. Baizongia pistaciae (strain Bp)).